The primary structure comprises 182 residues: Adenylate kinase (182 aa).

ATP is bound at residue 12–17; sequence GAGKGT. The interval 32 to 61 is NMP; the sequence is STGDLLRAEVKAGSELGKEAEAVMNRGELV. Residues Thr33, Arg38, 59–61, 85–88, and Gln92 each bind AMP; these read ELV and GFPR. The segment at 126-132 is LID; the sequence is ARGRADD. Arg127 contacts ATP. AMP is bound by residues Arg129 and Arg140. Gly168 contributes to the ATP binding site.

The protein belongs to the adenylate kinase family. Monomer.

It localises to the cytoplasm. The enzyme catalyses AMP + ATP = 2 ADP. It participates in purine metabolism; AMP biosynthesis via salvage pathway; AMP from ADP: step 1/1. Functionally, catalyzes the reversible transfer of the terminal phosphate group between ATP and AMP. Plays an important role in cellular energy homeostasis and in adenine nucleotide metabolism. The sequence is that of Adenylate kinase from Synechococcus sp. (strain RCC307).